The chain runs to 662 residues: uncharacterized protein (662 aa).

Helical transmembrane passes span 10–30 (SSIVSSALVSSAIGYAIGWPV), 46–66 (PVIGLGIFGAVAVSIFHFLPI), 68–88 (AINLMLIVLGLSAVAFWLSKG), 101–121 (GFCWFTVAFLLCLLPAFEIIP), 167–187 (LIYYYVWHFIAACSSVITGAT), 193–213 (IALTGMTALFSTFVVTWLAVA), 217–237 (SAYAAWWSLPLLFVGSLKPAV), 263–283 (PWVPQHVFSGTLALIAIMAYL), 285–305 (ILYSNAGRNMALAVFMGAILA), 312–332 (MWAGSLSLLLILPLVGALSVS), 342–362 (EVLISLSVTVVITLLCAAVLI), 373–393 (KVVEFWVFPIFAGDYWFLDIP), 394–414 (GFWLVLVFLEFGIIYLSFLIW), 432–452 (ALTVSVLAPLFCTQILHSVIM), 460–480 (VLIPSMLVMTALTSGLFSTTI), and 485–505 (LVGRLTTITAIILLAPSILVG).

It localises to the cell membrane. This is an uncharacterized protein from Sinorhizobium fredii (strain NBRC 101917 / NGR234).